The primary structure comprises 399 residues: uncharacterized protein (399 aa).

Residues Ala-375–Arg-399 are disordered.

It belongs to the mycobacterial PPE family.

This is an uncharacterized protein from Mycobacterium tuberculosis (strain CDC 1551 / Oshkosh).